Here is a 146-residue protein sequence, read N- to C-terminus: Large ribosomal subunit protein uL15 (146 aa).

The interval 1-57 (MKLHELKPAQGSRKTRNRVGRGSSSGNGKTAGRGQKGQKARSGGNIRSGFEGGQTPL) is disordered. Over residues 23 to 35 (SSSGNGKTAGRGQ) the composition is skewed to gly residues.

This sequence belongs to the universal ribosomal protein uL15 family. Part of the 50S ribosomal subunit.

Binds to the 23S rRNA. The chain is Large ribosomal subunit protein uL15 from Streptococcus mutans serotype c (strain ATCC 700610 / UA159).